Consider the following 145-residue polypeptide: 3-hydroxyacyl-[acyl-carrier-protein] dehydratase FabZ (145 aa).

The active site involves His49.

This sequence belongs to the thioester dehydratase family. FabZ subfamily.

The protein localises to the cytoplasm. The enzyme catalyses a (3R)-hydroxyacyl-[ACP] = a (2E)-enoyl-[ACP] + H2O. Involved in unsaturated fatty acids biosynthesis. Catalyzes the dehydration of short chain beta-hydroxyacyl-ACPs and long chain saturated and unsaturated beta-hydroxyacyl-ACPs. The protein is 3-hydroxyacyl-[acyl-carrier-protein] dehydratase FabZ of Rickettsia africae (strain ESF-5).